Here is a 170-residue protein sequence, read N- to C-terminus: Peroxidase 2 (170 aa).

A glycan (N-linked (GlcNAc...) asparagine) is linked at Asn9. Residue His24 participates in heme b binding. Thr25 serves as a coordination point for Ca(2+). Cys31 and Cys59 are joined by a disulfide. Residues Asp73, Thr76, and Asp81 each contribute to the Ca(2+) site.

The protein belongs to the peroxidase family. Classical plant (class III) peroxidase subfamily. Ca(2+) is required as a cofactor. Heme b serves as cofactor.

The enzyme catalyses 2 a phenolic donor + H2O2 = 2 a phenolic radical donor + 2 H2O. Functionally, removal of H(2)O(2), oxidation of toxic reductants, biosynthesis and degradation of lignin, suberization, auxin catabolism, response to environmental stresses such as wounding, pathogen attack and oxidative stress. These functions might be dependent on each isozyme/isoform in each plant tissue. In terms of biological role, involved in defense response to powdery meldew fungus. This is Peroxidase 2 from Hordeum vulgare (Barley).